The primary structure comprises 372 residues: NAD(P)H-quinone oxidoreductase subunit 1 (372 aa).

8 helical membrane-spanning segments follow: residues 28–48, 97–117, 130–150, 176–196, 204–224, 265–285, 308–328, and 351–371; these read IWLPLPLLLMIIGATVGVLVV, WLFTLGPALVVIPVFLSYLIV, VGIFLWISLSSIAPIGLLMSG, LALAVLAIAMMSNSLSTIDIV, ILGWNIWRQPVGFLIFWIAAL, LVLSALIVSILYLGGWEFPIP, SLGIIMTLVKTYALVFIAVLL, and VALVNLLLTAALKLAFPIAFG.

The protein belongs to the complex I subunit 1 family. As to quaternary structure, NDH-1 is composed of at least 11 different subunits.

Its subcellular location is the cellular thylakoid membrane. It carries out the reaction a plastoquinone + NADH + (n+1) H(+)(in) = a plastoquinol + NAD(+) + n H(+)(out). The catalysed reaction is a plastoquinone + NADPH + (n+1) H(+)(in) = a plastoquinol + NADP(+) + n H(+)(out). In terms of biological role, NDH-1 shuttles electrons from an unknown electron donor, via FMN and iron-sulfur (Fe-S) centers, to quinones in the respiratory and/or the photosynthetic chain. The immediate electron acceptor for the enzyme in this species is believed to be plastoquinone. Couples the redox reaction to proton translocation, and thus conserves the redox energy in a proton gradient. The chain is NAD(P)H-quinone oxidoreductase subunit 1 from Picosynechococcus sp. (strain ATCC 27264 / PCC 7002 / PR-6) (Agmenellum quadruplicatum).